Here is a 208-residue protein sequence, read N- to C-terminus: Methionine-R-sulfoxide reductase B1 (208 aa).

Residues 27–36 (QDSDNPDKRY) are compositionally biased toward basic and acidic residues. The interval 27–48 (QDSDNPDKRYSGPAATMDNKSE) is disordered. One can recognise a MsrB domain in the interval 54 to 188 (KEELRKRLTP…NSASIEFVNA (135 aa)). Residues Cys-93, Cys-96, Cys-154, and Cys-157 each coordinate Zn(2+). An intrachain disulfide couples Cys-111 to Cys-177. Cys-177 acts as the Nucleophile in catalysis. Residues 189-208 (DPATSSPPVATPTAAPIAQQ) form a disordered region.

Belongs to the MsrB Met sulfoxide reductase family. Zn(2+) serves as cofactor. Present in the embryonic nervous system (brain and cord) in neuronal cell bodies, along axons. Also present in embryonic muscles in motor axons. Localizes to growing bristle tips where it is distributed in small puntae. Present at and at sites of actin localization.

The protein localises to the cytoplasm. It is found in the nucleus. Its subcellular location is the cytoskeleton. It carries out the reaction L-methionyl-[protein] + [thioredoxin]-disulfide + H2O = L-methionyl-(R)-S-oxide-[protein] + [thioredoxin]-dithiol. Functionally, methionine-sulfoxide reductase that specifically reduces methionine (R)-sulfoxide back to methionine. While in many cases methionine oxidation is the result of random oxidation following oxidative stress, methionine oxidation is also a post-translational modification that takes place on specific residues. Acts as a regulator of actin assembly by reducing methionine (R)-sulfoxide mediated by Mical on actin thereby promoting filament repolymerization. The sequence is that of Methionine-R-sulfoxide reductase B1 (SelR) from Drosophila melanogaster (Fruit fly).